A 576-amino-acid polypeptide reads, in one-letter code: MSTLQLKETKVPSVQFVGDDDVLSHILDREGGTKLKKEKAQLLVNPQKVIKKADCELEKSDLEVLEDQNYVKVLGRNIQESLGNGSAKDGRNKVYSFQQRKHPEEMTKLALELAKTSGKKDPLDSNDPEITKNIAQKSKGHSTSEKAPLVNNNKTEFLSTQPHNLRKRIIASRSHYDSESEYSASSSEDDEEATKDEEEDTNVARLSQKSQGQNRLLPAPVSKETLPKKKKRDKASDLVEEYFEAHSSSKVLTSDRTLQRLRRARVDQKTLHNLLRKFVPSFSAEIERLNQQHEKLFHKWMLQLHLGFNIVLYGLGSKRDLLEKFRTTMLQDSIHVVINGYFPGVSVKSILNSITEDVLSHVGTFQSVLDQRDWIINRFKEDSSLELFLLIHNLDSQMLRGDNSQQILGQLSSLHNVYLIASIDHLNAPLMWDHAKQSLYNWLWYETTTYSPYTEETSYENSLLVKQSGSLPLSSLIHVLRSLTPNARGIFRLLMKFQLDNQDSPSYIGLSFQDFYQQCREAFLVNSDLTLRAQLTEFRDHKLIRTKKGTDGVEYLLIPVDSGILADFLEKEEEEA.

The stretch at 1–100 (MSTLQLKETK…RNKVYSFQQR (100 aa)) is one Involved in LRWD1-binding repeat. Residues 112-233 (ELAKTSGKKD…ETLPKKKKRD (122 aa)) are disordered. Thr-116 is modified (phosphothreonine). The span at 150–163 (VNNNKTEFLSTQPH) shows a compositional bias: polar residues. The span at 187–201 (SEDDEEATKDEEEDT) shows a compositional bias: acidic residues. Positions 204-214 (ARLSQKSQGQN) are enriched in polar residues. Phosphothreonine is present on Thr-225. A Phosphoserine modification is found at Ser-247.

It belongs to the ORC2 family. In terms of assembly, component of ORC, a complex composed of at least 6 subunits: ORC1, ORC2, ORC3, ORC4, ORC5 and ORC6. ORC is regulated in a cell-cycle dependent manner. It is sequentially assembled at the exit from anaphase of mitosis and disassembled as cells enter S phase. Interacts with DBF4. Interacts with MCM10. Interacts with LRWD1 throughout the cell cycle; this interaction, which occurs only with non-ubiquitinated form of LRWD1, prevents LRWD1 ubiquitination and hence stabilizes the protein. Interacts with POLQ.

The protein localises to the nucleus. Functionally, component of the origin recognition complex (ORC) that binds origins of replication. DNA-binding is ATP-dependent. The specific DNA sequences that define origins of replication have not been identified yet. ORC is required to assemble the pre-replication complex necessary to initiate DNA replication. Binds histone H3 and H4 trimethylation marks H3K9me3, H3K20me3 and H4K27me3. Stabilizes LRWD1, by protecting it from ubiquitin-mediated proteasomal degradation. Also stabilizes ORC3. The chain is Origin recognition complex subunit 2 (Orc2) from Mus musculus (Mouse).